A 781-amino-acid chain; its full sequence is Lon protease (781 aa).

A Lon N-terminal domain is found at 16–214; that stretch reads ANVLVTRGIV…KILSFTIDER (199 aa). 365–372 lines the ATP pocket; the sequence is GPPGVGKT. Positions 601 to 781 constitute a Lon proteolytic domain; it reads EYMPGVVNGM…YDDVYNRLFK (181 aa). Residues serine 688 and lysine 731 contribute to the active site.

It belongs to the peptidase S16 family. As to quaternary structure, homohexamer. Organized in a ring with a central cavity.

The protein resides in the cytoplasm. It carries out the reaction Hydrolysis of proteins in presence of ATP.. ATP-dependent serine protease that mediates the selective degradation of mutant and abnormal proteins as well as certain short-lived regulatory proteins. Required for cellular homeostasis and for survival from DNA damage and developmental changes induced by stress. Degrades polypeptides processively to yield small peptide fragments that are 5 to 10 amino acids long. Binds to DNA in a double-stranded, site-specific manner. The polypeptide is Lon protease (Malacoplasma penetrans (strain HF-2) (Mycoplasma penetrans)).